Here is a 56-residue protein sequence, read N- to C-terminus: Large ribosomal subunit protein bL32 (56 aa).

Residues 1–36 (MAVQQNKKSRSKRGMRRSHDALSTAQLSVDATSGEV) form a disordered region. The span at 7–16 (KKSRSKRGMR) shows a compositional bias: basic residues. The span at 21–31 (ALSTAQLSVDA) shows a compositional bias: polar residues.

This sequence belongs to the bacterial ribosomal protein bL32 family.

This chain is Large ribosomal subunit protein bL32, found in Shewanella oneidensis (strain ATCC 700550 / JCM 31522 / CIP 106686 / LMG 19005 / NCIMB 14063 / MR-1).